Consider the following 1099-residue polypeptide: MCPSEMGTLWHHWSPVLISLAALFSKVTEGRGILESIQRFSLLPTYLPVTYHINNADVSFFLKEANQDIMRNSSLQSRVESFLIYKSRRLPVLNASYGPFSIEQVVPQDLMLPSNPFGFTNKFSLNWKLKAHILRDKVYLSRPKVQVLFHIMGRDWDDRSAGEKLPCLRVFAFRETREVRGSCRLQGDLGLCVAELELLSSWFSPPTVVAGRRKSVDQPEGTPVELYYTVHPGGERGDCVREDARRSNGIRTGHSDIDESGPPLQRIGSIFLYQTHRKPSLRELRLDNSVAIHYIPKTVRKGDVLTFPVSISRNSTEDRFTLRAKVKKGVNIIGVRASSPSIWDVKERTDYTGKYAPAVIVCQKKAAGSENSADGASYEVMQIDVEVEEPGDLPATQLVTWQVEYPGEITSDLGVSKIYVSPKDLIGVVPLAMEAEILNTAILTGKTVAVPVKVVSVEDDGTVTELLESVECRSSDEDVIKVSDRCDYVFVNGKEMKGKVNVVVNFTYQHLSSPLEMTVWVPRLPLQIEVSDTELNQIKGWRVPIVSSRRPAGDSEEEEDDERRGRGCTLQYQHAMVRVLTQFVAEAAGPGGHLAHLLGSDWQVDITELINDFMQVEEPRIAKLQGGQILMGQELGMTTIQILSPLSDTILAEKTITVLDEKVTITDLGVQLVTGLSLSLQLSPGSNRAIFATAVAQELLQRPKQEAAISCWVQFSDGSVTPLDIYDGKDFSLMATSLDEKVVSIHQDPKFKWPIIAAETEGQGTLVKVEMVISESCQKSKRKSVLAVGTANIKVKFGQNDANPNTSDSRHTGAGVHMENNVSDRRPKKPSQEWGSQEGQYYGSSSMGLMEGRGTTTDRSILQKKKGQESLLDDNSHLQTIPSDLTSFPAQVDLPRSNGEMDGNDLMQASKGLSDLEIGMYALLGVFCLAILVFLINCVTFALKYRHKQVPFEEQEGMSHSHDWVGLSNRTELLENHINFASSQDEQITAIDRGMDFEESKYLLSTNSQKSINGQLFKPLGPIIIDGKDQKSEPPTSPTSKRKRVKFTTFTAVSSDDEYPTRNSIVMSSEDDIKWVCQDLDPGDCKELHNYMERLHENV.

The N-terminal stretch at 1–30 is a signal peptide; it reads MCPSEMGTLWHHWSPVLISLAALFSKVTEG. The Extracellular segment spans residues 31-915; that stretch reads RGILESIQRF…LMQASKGLSD (885 aa). An N-linked (GlcNAc...) asparagine glycan is attached at asparagine 505. The segment at 797-858 is disordered; the sequence is FGQNDANPNT…LMEGRGTTTD (62 aa). Over residues 835–848 the composition is skewed to low complexity; that stretch reads GSQEGQYYGSSSMG. Residues 916 to 936 form a helical membrane-spanning segment; the sequence is LEIGMYALLGVFCLAILVFLI. The Cytoplasmic portion of the chain corresponds to 937–1099; sequence NCVTFALKYR…NYMERLHENV (163 aa).

Belongs to the TMEM132 family. Interacts (via C-terminus) with NCKAP. In terms of tissue distribution, expressed in mature oligodendrocytes. Detected in the brain, lung, pancreas and testis. Highly expressed in mature neurons of the adult nervous system.

The protein localises to the membrane. Its function is as follows. Regulate neuronals morphology via inhibition of the WAVE regulatory complex (WCR), a complex that controls F-actin cytoskeletal dynamics. This is Transmembrane protein 132D from Homo sapiens (Human).